A 152-amino-acid chain; its full sequence is Deoxyuridine 5'-triphosphate nucleotidohydrolase (152 aa).

Substrate is bound by residues 72 to 74 (RSG), Asn85, and 89 to 91 (TID).

Belongs to the dUTPase family. Mg(2+) is required as a cofactor.

It catalyses the reaction dUTP + H2O = dUMP + diphosphate + H(+). It functions in the pathway pyrimidine metabolism; dUMP biosynthesis; dUMP from dCTP (dUTP route): step 2/2. Its function is as follows. This enzyme is involved in nucleotide metabolism: it produces dUMP, the immediate precursor of thymidine nucleotides and it decreases the intracellular concentration of dUTP so that uracil cannot be incorporated into DNA. This is Deoxyuridine 5'-triphosphate nucleotidohydrolase from Bradyrhizobium sp. (strain ORS 278).